The chain runs to 314 residues: 4-hydroxy-3-methylbut-2-enyl diphosphate reductase (314 aa).

Cysteine 12 lines the [4Fe-4S] cluster pocket. Residues histidine 41 and histidine 74 each coordinate (2E)-4-hydroxy-3-methylbut-2-enyl diphosphate. Residues histidine 41 and histidine 74 each coordinate dimethylallyl diphosphate. Isopentenyl diphosphate is bound by residues histidine 41 and histidine 74. Cysteine 96 is a [4Fe-4S] cluster binding site. Histidine 124 lines the (2E)-4-hydroxy-3-methylbut-2-enyl diphosphate pocket. Dimethylallyl diphosphate is bound at residue histidine 124. An isopentenyl diphosphate-binding site is contributed by histidine 124. Glutamate 126 (proton donor) is an active-site residue. Threonine 168 is a (2E)-4-hydroxy-3-methylbut-2-enyl diphosphate binding site. Cysteine 198 is a [4Fe-4S] cluster binding site. (2E)-4-hydroxy-3-methylbut-2-enyl diphosphate contacts are provided by serine 226, serine 227, asparagine 228, and serine 270. Positions 226, 227, 228, and 270 each coordinate dimethylallyl diphosphate. Serine 226, serine 227, asparagine 228, and serine 270 together coordinate isopentenyl diphosphate.

It belongs to the IspH family. [4Fe-4S] cluster is required as a cofactor.

It catalyses the reaction isopentenyl diphosphate + 2 oxidized [2Fe-2S]-[ferredoxin] + H2O = (2E)-4-hydroxy-3-methylbut-2-enyl diphosphate + 2 reduced [2Fe-2S]-[ferredoxin] + 2 H(+). It carries out the reaction dimethylallyl diphosphate + 2 oxidized [2Fe-2S]-[ferredoxin] + H2O = (2E)-4-hydroxy-3-methylbut-2-enyl diphosphate + 2 reduced [2Fe-2S]-[ferredoxin] + 2 H(+). Its pathway is isoprenoid biosynthesis; dimethylallyl diphosphate biosynthesis; dimethylallyl diphosphate from (2E)-4-hydroxy-3-methylbutenyl diphosphate: step 1/1. It participates in isoprenoid biosynthesis; isopentenyl diphosphate biosynthesis via DXP pathway; isopentenyl diphosphate from 1-deoxy-D-xylulose 5-phosphate: step 6/6. Functionally, catalyzes the conversion of 1-hydroxy-2-methyl-2-(E)-butenyl 4-diphosphate (HMBPP) into a mixture of isopentenyl diphosphate (IPP) and dimethylallyl diphosphate (DMAPP). Acts in the terminal step of the DOXP/MEP pathway for isoprenoid precursor biosynthesis. This is 4-hydroxy-3-methylbut-2-enyl diphosphate reductase from Pseudomonas aeruginosa (strain ATCC 15692 / DSM 22644 / CIP 104116 / JCM 14847 / LMG 12228 / 1C / PRS 101 / PAO1).